We begin with the raw amino-acid sequence, 323 residues long: MSEEKIHKIILVGDGAVGSTYAFSLVQQGIAQELGIVDIVKERTQGDAIDLADATPWIAPKTIYSAEYSDAKDADLVVISAGAPQKPGETRLDLVNKNLKILSSIVEPIVESGFNGIFLVAANPVDILTHATWRMSGFPKDRVIGSGTSLDTGRLQKVIGEMEHVDPRSVNAYMLGEHGDTEFPVWSYNNVGGVKVSDWVKAHPEVGENKLEAIHKEVADMAYDIINKKGATFYGIGTALAFITKAILNNEHRVLPLSVPMDGEYGLHDIHIGTPAVVGRHGLEQVIEMPLNADEQAKMEASAKQLKEVMDKAFKETGVKVRQ.

NAD(+) contacts are provided by residues Val-17, Asp-38, Arg-43, Tyr-68, and 82-83 (GA). Residues Gln-85 and Arg-91 each contribute to the substrate site. NAD(+) contacts are provided by residues Ser-104, 121–123 (AAN), and Ser-146. A substrate-binding site is contributed by 123–126 (NPVD). 151-154 (DTGR) contributes to the substrate binding site. The Proton acceptor role is filled by His-178. Phosphotyrosine is present on Tyr-223. Thr-232 contributes to the substrate binding site.

Belongs to the LDH/MDH superfamily. LDH family. In terms of assembly, homotetramer.

The protein localises to the cytoplasm. The enzyme catalyses (S)-lactate + NAD(+) = pyruvate + NADH + H(+). It functions in the pathway fermentation; pyruvate fermentation to lactate; (S)-lactate from pyruvate: step 1/1. Catalyzes the conversion of lactate to pyruvate. This is L-lactate dehydrogenase 1 from Lactobacillus johnsonii (strain CNCM I-12250 / La1 / NCC 533).